The sequence spans 874 residues: Cyanophycin synthetase (874 aa).

The region spanning 224-480 (KTTLAEAGIP…VAAPVIDMLF (257 aa)) is the ATP-grasp domain. 495-501 (GTNGKTT) provides a ligand contact to ATP.

It in the C-terminal section; belongs to the MurCDEF family. As to quaternary structure, homodimer.

The enzyme catalyses [L-4-(L-arginin-2-N-yl)aspartate](n) + L-aspartate + ATP = [L-4-(L-arginin-2-N-yl)aspartate](n)-L-aspartate + ADP + phosphate + H(+). The catalysed reaction is [L-4-(L-arginin-2-N-yl)aspartate](n)-L-aspartate + L-arginine + ATP = [L-4-(L-arginin-2-N-yl)aspartate](n+1) + ADP + phosphate + H(+). Catalyzes the ATP-dependent polymerization of arginine and aspartate to multi-L-arginyl-poly-L-aspartic acid (cyanophycin; a water-insoluble reserve polymer). This chain is Cyanophycin synthetase (cphA), found in Geminocystis herdmanii (strain PCC 6308) (Synechocystis sp. (strain PCC 6308)).